Here is a 128-residue protein sequence, read N- to C-terminus: MSAKTDEILESLKSLSLLEASELVKQIEEAFGVSAAASAGVVMAAPGAAGGGEAAEEKTEFDVILESFEASAKIKVLKAVREATGLGLGDAKALVEAAPKLVKEGASKDDAEALKKAIEEVGGKVTIK.

It belongs to the bacterial ribosomal protein bL12 family. Homodimer. Part of the ribosomal stalk of the 50S ribosomal subunit. Forms a multimeric L10(L12)X complex, where L10 forms an elongated spine to which 2 to 4 L12 dimers bind in a sequential fashion. Binds GTP-bound translation factors.

Functionally, forms part of the ribosomal stalk which helps the ribosome interact with GTP-bound translation factors. Is thus essential for accurate translation. The chain is Large ribosomal subunit protein bL12 from Synechococcus sp. (strain CC9902).